The following is a 494-amino-acid chain: Glycerol kinase (494 aa).

Threonine 13 contributes to the ADP binding site. ATP-binding residues include threonine 13, threonine 14, and serine 15. Position 13 (threonine 13) interacts with sn-glycerol 3-phosphate. An ADP-binding site is contributed by arginine 17. Sn-glycerol 3-phosphate-binding residues include arginine 83, glutamate 84, tyrosine 135, and aspartate 244. Glycerol contacts are provided by arginine 83, glutamate 84, tyrosine 135, aspartate 244, and glutamine 245. Residues threonine 266 and glycine 309 each coordinate ADP. 4 residues coordinate ATP: threonine 266, glycine 309, glutamine 313, and glycine 410. Positions 410 and 414 each coordinate ADP.

Belongs to the FGGY kinase family.

The enzyme catalyses glycerol + ATP = sn-glycerol 3-phosphate + ADP + H(+). The protein operates within polyol metabolism; glycerol degradation via glycerol kinase pathway; sn-glycerol 3-phosphate from glycerol: step 1/1. Its activity is regulated as follows. Inhibited by fructose 1,6-bisphosphate (FBP). Functionally, key enzyme in the regulation of glycerol uptake and metabolism. Catalyzes the phosphorylation of glycerol to yield sn-glycerol 3-phosphate. In Shewanella baltica (strain OS185), this protein is Glycerol kinase.